A 157-amino-acid chain; its full sequence is Transcription elongation factor GreA (157 aa).

It belongs to the GreA/GreB family.

Its function is as follows. Necessary for efficient RNA polymerase transcription elongation past template-encoded arresting sites. The arresting sites in DNA have the property of trapping a certain fraction of elongating RNA polymerases that pass through, resulting in locked ternary complexes. Cleavage of the nascent transcript by cleavage factors such as GreA or GreB allows the resumption of elongation from the new 3'terminus. GreA releases sequences of 2 to 3 nucleotides. The chain is Transcription elongation factor GreA from Bartonella henselae (strain ATCC 49882 / DSM 28221 / CCUG 30454 / Houston 1) (Rochalimaea henselae).